We begin with the raw amino-acid sequence, 228 residues long: Probable GTP-binding protein EngB (228 aa).

Residues Y48–S222 enclose the EngB-type G domain. GTP is bound by residues G56–S63, G83–L87, D101–G104, N168–D171, and F201–S203. S63 and T85 together coordinate Mg(2+).

Belongs to the TRAFAC class TrmE-Era-EngA-EngB-Septin-like GTPase superfamily. EngB GTPase family. Mg(2+) serves as cofactor.

Its function is as follows. Necessary for normal cell division and for the maintenance of normal septation. This chain is Probable GTP-binding protein EngB, found in Buchnera aphidicola subsp. Baizongia pistaciae (strain Bp).